Reading from the N-terminus, the 326-residue chain is Peroxidase 41 (326 aa).

The first 20 residues, 1–20, serve as a signal peptide directing secretion; that stretch reads MSSVINVLFVVLVFVPSIYS. N-linked (GlcNAc...) asparagine glycosylation occurs at Asn25. Cystine bridges form between Cys35-Cys116, Cys68-Cys73, Cys122-Cys318, and Cys201-Cys228. His66 serves as the catalytic Proton acceptor. Positions 67, 72, 74, and 76 each coordinate Ca(2+). Pro164 contributes to the substrate binding site. A glycan (N-linked (GlcNAc...) asparagine) is linked at Asn167. His194 is a binding site for heme b. Thr195 is a Ca(2+) binding site. The N-linked (GlcNAc...) asparagine glycan is linked to Asn234. 3 residues coordinate Ca(2+): Asp242, Thr245, and Asp250. Asn286 carries an N-linked (GlcNAc...) asparagine glycan.

The protein belongs to the peroxidase family. Classical plant (class III) peroxidase subfamily. It depends on heme b as a cofactor. Requires Ca(2+) as cofactor.

The protein resides in the secreted. The catalysed reaction is 2 a phenolic donor + H2O2 = 2 a phenolic radical donor + 2 H2O. Removal of H(2)O(2), oxidation of toxic reductants, biosynthesis and degradation of lignin, suberization, auxin catabolism, response to environmental stresses such as wounding, pathogen attack and oxidative stress. These functions might be dependent on each isozyme/isoform in each plant tissue. The chain is Peroxidase 41 (PER41) from Arabidopsis thaliana (Mouse-ear cress).